Reading from the N-terminus, the 210-residue chain is Uracil phosphoribosyltransferase (210 aa).

5-phospho-alpha-D-ribose 1-diphosphate-binding positions include arginine 78, arginine 103, and 130–138; that span reads DPMLATGGS. Uracil contacts are provided by residues isoleucine 193 and 198 to 200; that span reads GDA. Aspartate 199 lines the 5-phospho-alpha-D-ribose 1-diphosphate pocket.

Belongs to the UPRTase family. The cofactor is Mg(2+).

The catalysed reaction is UMP + diphosphate = 5-phospho-alpha-D-ribose 1-diphosphate + uracil. It functions in the pathway pyrimidine metabolism; UMP biosynthesis via salvage pathway; UMP from uracil: step 1/1. Its activity is regulated as follows. Allosterically activated by GTP. In terms of biological role, catalyzes the conversion of uracil and 5-phospho-alpha-D-ribose 1-diphosphate (PRPP) to UMP and diphosphate. This Laribacter hongkongensis (strain HLHK9) protein is Uracil phosphoribosyltransferase.